We begin with the raw amino-acid sequence, 251 residues long: 3-deoxy-manno-octulosonate cytidylyltransferase (251 aa).

This sequence belongs to the KdsB family.

It is found in the cytoplasm. It catalyses the reaction 3-deoxy-alpha-D-manno-oct-2-ulosonate + CTP = CMP-3-deoxy-beta-D-manno-octulosonate + diphosphate. Its pathway is nucleotide-sugar biosynthesis; CMP-3-deoxy-D-manno-octulosonate biosynthesis; CMP-3-deoxy-D-manno-octulosonate from 3-deoxy-D-manno-octulosonate and CTP: step 1/1. It participates in bacterial outer membrane biogenesis; lipopolysaccharide biosynthesis. In terms of biological role, activates KDO (a required 8-carbon sugar) for incorporation into bacterial lipopolysaccharide in Gram-negative bacteria. This Chromobacterium violaceum (strain ATCC 12472 / DSM 30191 / JCM 1249 / CCUG 213 / NBRC 12614 / NCIMB 9131 / NCTC 9757 / MK) protein is 3-deoxy-manno-octulosonate cytidylyltransferase.